Reading from the N-terminus, the 213-residue chain is LexA repressor (213 aa).

The segment at residues 27–47 (QTEIARAFGFKGIRAAQYHLE) is a DNA-binding region (H-T-H motif). Active-site for autocatalytic cleavage activity residues include S133 and K170.

It belongs to the peptidase S24 family. As to quaternary structure, homodimer.

The catalysed reaction is Hydrolysis of Ala-|-Gly bond in repressor LexA.. Its function is as follows. Represses a number of genes involved in the response to DNA damage (SOS response), including recA and lexA. Has been shown to bind to the palindromic sequence 5'-CTG-N(8-12)-C-[TC]-G. In the presence of single-stranded DNA, RecA interacts with LexA causing an autocatalytic cleavage which disrupts the DNA-binding part of LexA, leading to derepression of the SOS regulon and eventually DNA repair. The protein is LexA repressor of Xanthomonas citri (Xanthomonas campestris pv. citri).